The chain runs to 457 residues: Prenyltransferase ucdE (457 aa).

Positions 106, 198, 277, 279, 382, 447, and 451 each coordinate dimethylallyl diphosphate.

It belongs to the tryptophan dimethylallyltransferase family.

It participates in secondary metabolite biosynthesis. Its function is as follows. Nonribosomal peptide synthetase that mediates the biosynthesis of usterphenyllins and uscandidusins, p-terphenyl derivatives. Within the pathway, ucdE prenylates position C-5 of ring A of 3,15-dihydroxyterphenyllin to produce forms usterphenyllin B. UcdE further prenylates position C-14 of ring C of usterphenyllin B to form usterphenyllin A. The pathway begin with the biosynthesis of 4-hydroxyphenylpyruvate (HPPA) from L-tyrosine, possibly by the aminotransferase ucdG. The nonribosomal peptide synthetase ucdA then condenses two HPPA units to produce atromentin. The key step in this pathway is the reduction and dehydration of atromentin to form a terphenyl triol intermediate, performed by the NAD-dependent dehydrogenase ucdB. Further O-methylation by the methyltransferase ucdC forms terphenyllin carrying two methoxy moieties at C-9 and C-12, and subsequent dihydroxylation at C-3 of ring A and C-15 of ring C by the flavin-dependent oxygenase ucdD leads to 3,15-dihydroxyterphenyllin. Prenylation by ucdE at position C-5 of ring A forms usterphenyllin B, and is followed by a second prenylation at position C-14 of ring C to form usterphenyllin A. The following furan ring formation that leads to uscandidusins A and B was proven to be an unexpected spontaneous non-enzymatic reaction. The polypeptide is Prenyltransferase ucdE (Aspergillus ustus).